The sequence spans 261 residues: tRNA (guanine-N(7)-)-methyltransferase (261 aa).

S-adenosyl-L-methionine is bound by residues Glu-75, Glu-100, Asp-127, and Asp-150. Asp-150 is a catalytic residue. Residue Lys-154 participates in substrate binding. Positions 156–161 (RHNKRR) are interaction with RNA. Substrate contacts are provided by residues Asp-186 and 223–226 (THFE).

This sequence belongs to the class I-like SAM-binding methyltransferase superfamily. TrmB family.

The enzyme catalyses guanosine(46) in tRNA + S-adenosyl-L-methionine = N(7)-methylguanosine(46) in tRNA + S-adenosyl-L-homocysteine. The protein operates within tRNA modification; N(7)-methylguanine-tRNA biosynthesis. In terms of biological role, catalyzes the formation of N(7)-methylguanine at position 46 (m7G46) in tRNA. The protein is tRNA (guanine-N(7)-)-methyltransferase of Xanthomonas axonopodis pv. citri (strain 306).